The primary structure comprises 291 residues: Formamidopyrimidine-DNA glycosylase (291 aa).

Pro2 functions as the Schiff-base intermediate with DNA in the catalytic mechanism. The Proton donor role is filled by Glu3. Lys61 (proton donor; for beta-elimination activity) is an active-site residue. DNA-binding residues include His103, Arg123, and Arg165. The FPG-type zinc-finger motif lies at 251-285 (EVYGRGGQACSRCASTIRRDAFMNRSSFSCPACQP). Arg275 (proton donor; for delta-elimination activity) is an active-site residue.

It belongs to the FPG family. Monomer. The cofactor is Zn(2+).

The enzyme catalyses Hydrolysis of DNA containing ring-opened 7-methylguanine residues, releasing 2,6-diamino-4-hydroxy-5-(N-methyl)formamidopyrimidine.. It carries out the reaction 2'-deoxyribonucleotide-(2'-deoxyribose 5'-phosphate)-2'-deoxyribonucleotide-DNA = a 3'-end 2'-deoxyribonucleotide-(2,3-dehydro-2,3-deoxyribose 5'-phosphate)-DNA + a 5'-end 5'-phospho-2'-deoxyribonucleoside-DNA + H(+). Its function is as follows. Involved in base excision repair of DNA damaged by oxidation or by mutagenic agents. Acts as a DNA glycosylase that recognizes and removes damaged bases. Has a preference for oxidized purines, such as 7,8-dihydro-8-oxoguanine (8-oxoG). Has AP (apurinic/apyrimidinic) lyase activity and introduces nicks in the DNA strand. Cleaves the DNA backbone by beta-delta elimination to generate a single-strand break at the site of the removed base with both 3'- and 5'-phosphates. The sequence is that of Formamidopyrimidine-DNA glycosylase from Parafrankia sp. (strain EAN1pec).